The chain runs to 410 residues: Lissencephaly-1 homolog B (410 aa).

The 33-residue stretch at 7–39 folds into the LisH domain; it reads QRDELNRAIADYLRSNGYEEAYSTFKKEAELDV. Positions 56-82 form a coiled coil; the sequence is TSVIRLQKKVMELESKLNEAKEEITLG. WD repeat units follow at residues 106–147, 148–187, 190–229, 232–271, 274–333, 336–377, and 379–410; these read GHRS…RTLK, GHTDSVQDISFDQTGKLLASCSADMTIKLWDFQGFECIRT, GHDHNVSSVAIMPNGDHIVSASRDKTMKMWEVATGYCVKT, GHREWVRMVRPNQDGTLLASCSNDQTVRVWVVATKECKAE, EHEH…CLMT, GHDN…KTLS, and HEHFVTSLDFHKASPYVVTGSVDQTVKVWECR.

The protein belongs to the WD repeat LIS1/nudF family. As to quaternary structure, can self-associate. Component of the cytosolic PAF-AH (I) heterotetrameric enzyme, which is composed of PAFAH1B1 (beta), PAFAH1B2 (alpha2) and PAFAH1B3 (alpha1) subunits. The catalytic activity of the enzyme resides in the alpha1 (PAFAH1B3) and alpha2 (PAFAH1B2) subunits, whereas the beta subunit (PAFAH1B1) has regulatory activity. Trimer formation is not essential for the catalytic activity. Interacts with dynein, dynactin, nde1 and ndel1. Enriched in the photoreceptor cell layer.

It is found in the cytoplasm. The protein resides in the cytoskeleton. Its subcellular location is the microtubule organizing center. The protein localises to the centrosome. Its function is as follows. Regulatory subunit (beta subunit) of the cytosolic type I platelet-activating factor (PAF) acetylhydrolase (PAF-AH (I)), an enzyme that catalyzes the hydrolyze of the acetyl group at the sn-2 position of PAF and its analogs and participates in the PAF inactivation. Regulates the PAF-AH (I) activity in a catalytic dimer composition-dependent manner. Positively regulates the activity of the minus-end directed microtubule motor protein dynein. May enhance dynein-mediated microtubule sliding by targeting dynein to the microtubule plus end. Required for several dynein- and microtubule-dependent processes such as the maintenance of Golgi integrity, the peripheral transport of microtubule fragments and the coupling of the nucleus and centrosome. May be required for proliferation of neuronal precursors and neuronal migration. Involved in the positioning of nuclei in photoreceptor cells. The polypeptide is Lissencephaly-1 homolog B (pafah1b1b) (Danio rerio (Zebrafish)).